The primary structure comprises 184 residues: MILMKDIVRDGDPVLRQVAKPLTFPLSDHYKQLAEDMMEYLVNSQDPKIAEKHQLRAGVGLAAPQVGEGVQMAALLVPDDKGEIIFKEVYVNPEIVSESVRQACLSEGEGCLSVDKVINGYVPRPDKLTIHYYTVDGEEKTIRLKDYPAIVSSHEIDHLNGHLFYDRINKKEPFALKEDTVVIS.

Residues Cys-111 and His-154 each contribute to the Fe cation site. Glu-155 is an active-site residue. His-158 lines the Fe cation pocket.

This sequence belongs to the polypeptide deformylase family. The cofactor is Fe(2+).

The enzyme catalyses N-terminal N-formyl-L-methionyl-[peptide] + H2O = N-terminal L-methionyl-[peptide] + formate. Removes the formyl group from the N-terminal Met of newly synthesized proteins. Requires at least a dipeptide for an efficient rate of reaction. N-terminal L-methionine is a prerequisite for activity but the enzyme has broad specificity at other positions. The protein is Peptide deformylase of Lactobacillus helveticus (strain DPC 4571).